Here is a 300-residue protein sequence, read N- to C-terminus: Cytochrome b (300 aa).

Transmembrane regions (helical) follow at residues 28–48, 72–94, 107–127, 168–187, 223–243, and 279–299; these read YGFLLGIVFFIQILKGVLLAL, WCFRYMHATGASFVFILTYLHIL, SWISGLMIFLISIVTAFYGYV, FFVFIYFPFIALCQSLFGIL, IPNKTAGLLVMLASLQILFLL, and IGCQLPQILHFIWSFIYYIIL. His78 and His92 together coordinate heme b.

Belongs to the cytochrome b family. In terms of assembly, the main subunits of complex b-c1 are: cytochrome b, cytochrome c1 and the Rieske protein. Heme b serves as cofactor.

It is found in the mitochondrion inner membrane. Functionally, component of the ubiquinol-cytochrome c reductase complex (complex III or cytochrome b-c1 complex) that is part of the mitochondrial respiratory chain. The b-c1 complex mediates electron transfer from ubiquinol to cytochrome c. Contributes to the generation of a proton gradient across the mitochondrial membrane that is then used for ATP synthesis. This chain is Cytochrome b (MT-CYB), found in Plasmodium gallinaceum.